A 394-amino-acid polypeptide reads, in one-letter code: Protein-glutamate methylesterase/protein-glutamine glutaminase of group 2 operon (394 aa).

The Response regulatory domain maps to 21 to 139; sequence RVMVVDDSAV…ELTGADTFKR (119 aa). Asp-72 carries the post-translational modification 4-aspartylphosphate. Residues 148–201 form a disordered region; it reads LGAAARRSGPRREGTAAARPPGAAAQPTSGYTLPSPVRAKPETGPLTVRPLPPD. Residues 162-172 are compositionally biased toward low complexity; the sequence is TAAARPPGAAA. The region spanning 200–382 is the CheB-type methylesterase domain; that stretch reads PDGRPDVIAI…SAILPLKEIG (183 aa). Catalysis depends on residues Ser-212, His-238, and Asp-334.

It belongs to the CheB family. Post-translationally, phosphorylated by CheA. Phosphorylation of the N-terminal regulatory domain activates the methylesterase activity.

The protein localises to the cytoplasm. It carries out the reaction [protein]-L-glutamate 5-O-methyl ester + H2O = L-glutamyl-[protein] + methanol + H(+). The enzyme catalyses L-glutaminyl-[protein] + H2O = L-glutamyl-[protein] + NH4(+). In terms of biological role, involved in chemotaxis. Part of a chemotaxis signal transduction system that modulates chemotaxis in response to various stimuli. Catalyzes the demethylation of specific methylglutamate residues introduced into the chemoreceptors (methyl-accepting chemotaxis proteins or MCP) by CheR. Also mediates the irreversible deamidation of specific glutamine residues to glutamic acid. The protein is Protein-glutamate methylesterase/protein-glutamine glutaminase of group 2 operon of Rhodospirillum centenum (strain ATCC 51521 / SW).